The chain runs to 327 residues: MVREKVKVSTRTLQWRCVESRRDSKRLYYGRFILSPLMKGQADTIGIAMRRALLGEIEGTCITRAKSENIPHDYSNIVGIQESVHEILMNLNEIVLRSNLYGTRNALICVQGPGYITARDIILPPSVEIVDNTQHIATVTESIDLCIGLKIERNRGYSLKMSNNFEDRSYPIDAVFMPVQNANHSIHSYGNGNGKQEILFLEIWTNGSLTPKEALHEASRNLINLFIPFLHVEEETFHLENNQHQVTLPLFPFHNRLVNLRKKKKELAFQYIFIDQLELPPRIYNCLKKSNIHTLLDLLNNSQEDLIKIEHFHIEDVKKILDILEKK.

Positions 1–233 (MVREKVKVST…NLFIPFLHVE (233 aa)) are alpha N-terminal domain (alpha-NTD). Residues 267-327 (LAFQYIFIDQ…KKILDILEKK (61 aa)) are alpha C-terminal domain (alpha-CTD).

The protein belongs to the RNA polymerase alpha chain family. In plastids the minimal PEP RNA polymerase catalytic core is composed of four subunits: alpha, beta, beta', and beta''. When a (nuclear-encoded) sigma factor is associated with the core the holoenzyme is formed, which can initiate transcription.

It is found in the plastid. The protein localises to the chloroplast. It catalyses the reaction RNA(n) + a ribonucleoside 5'-triphosphate = RNA(n+1) + diphosphate. In terms of biological role, DNA-dependent RNA polymerase catalyzes the transcription of DNA into RNA using the four ribonucleoside triphosphates as substrates. This chain is DNA-directed RNA polymerase subunit alpha, found in Draba nemorosa (Woodland whitlowgrass).